Reading from the N-terminus, the 303-residue chain is uncharacterized protein (303 aa).

It localises to the cytoplasm. This is an uncharacterized protein from Saccharomyces cerevisiae (strain ATCC 204508 / S288c) (Baker's yeast).